The following is a 119-amino-acid chain: Ribonuclease P protein component (119 aa).

It belongs to the RnpA family. Consists of a catalytic RNA component (M1 or rnpB) and a protein subunit.

It catalyses the reaction Endonucleolytic cleavage of RNA, removing 5'-extranucleotides from tRNA precursor.. Its function is as follows. RNaseP catalyzes the removal of the 5'-leader sequence from pre-tRNA to produce the mature 5'-terminus. It can also cleave other RNA substrates such as 4.5S RNA. The protein component plays an auxiliary but essential role in vivo by binding to the 5'-leader sequence and broadening the substrate specificity of the ribozyme. This is Ribonuclease P protein component from Streptococcus mutans serotype c (strain ATCC 700610 / UA159).